Consider the following 122-residue polypeptide: Large ribosomal subunit protein uL18 (122 aa).

Belongs to the universal ribosomal protein uL18 family. As to quaternary structure, part of the 50S ribosomal subunit; part of the 5S rRNA/L5/L18/L25 subcomplex. Contacts the 5S and 23S rRNAs.

Its function is as follows. This is one of the proteins that bind and probably mediate the attachment of the 5S RNA into the large ribosomal subunit, where it forms part of the central protuberance. The sequence is that of Large ribosomal subunit protein uL18 from Prochlorococcus marinus (strain MIT 9301).